The chain runs to 154 residues: Interleukin-2 (154 aa).

Residues 1-20 (MYRMQLLSCIALSLALVTNS) form the signal peptide. O-linked (GalNAc...) threonine glycosylation is present at threonine 23. A disulfide bridge links cysteine 78 with cysteine 126.

It belongs to the IL-2 family.

Its subcellular location is the secreted. In terms of biological role, cytokine produced by activated CD4-positive helper T-cells and to a lesser extend activated CD8-positive T-cells and natural killer (NK) cells that plays pivotal roles in the immune response and tolerance. Binds to a receptor complex composed of either the high-affinity trimeric IL-2R (IL2RA/CD25, IL2RB/CD122 and IL2RG/CD132) or the low-affinity dimeric IL-2R (IL2RB and IL2RG). Interaction with the receptor leads to oligomerization and conformation changes in the IL-2R subunits resulting in downstream signaling starting with phosphorylation of JAK1 and JAK3. In turn, JAK1 and JAK3 phosphorylate the receptor to form a docking site leading to the phosphorylation of several substrates including STAT5. This process leads to activation of several pathways including STAT, phosphoinositide-3-kinase/PI3K and mitogen-activated protein kinase/MAPK pathways. Functions as a T-cell growth factor and can increase NK-cell cytolytic activity as well. Promotes strong proliferation of activated B-cells and subsequently immunoglobulin production. Plays a pivotal role in regulating the adaptive immune system by controlling the survival and proliferation of regulatory T-cells, which are required for the maintenance of immune tolerance. Moreover, participates in the differentiation and homeostasis of effector T-cell subsets, including Th1, Th2, Th17 as well as memory CD8-positive T-cells. The protein is Interleukin-2 (IL2) of Cercocebus atys (Sooty mangabey).